Here is a 281-residue protein sequence, read N- to C-terminus: uncharacterized protein (281 aa).

This is an uncharacterized protein from Acanthamoeba polyphaga (Amoeba).